Here is a 473-residue protein sequence, read N- to C-terminus: Argininosuccinate lyase (473 aa).

N-acetylalanine is present on alanine 2. Position 7 is an N6-acetyllysine (lysine 7). Residue serine 27 coordinates 2-(N(omega)-L-arginino)succinate. At lysine 69 the chain carries N6-acetyllysine. 2-(N(omega)-L-arginino)succinate is bound by residues asparagine 114 and threonine 159. The active-site Proton acceptor is histidine 160. Serine 281 (proton donor) is an active-site residue. The residue at position 288 (lysine 288) is an N6-acetyllysine. Residues asparagine 289, tyrosine 321, glutamine 326, and lysine 329 each contribute to the 2-(N(omega)-L-arginino)succinate site.

Belongs to the lyase 1 family. Argininosuccinate lyase subfamily. In terms of assembly, homotetramer. Forms tissue-specific complexes with ASS1, SLC7A1, HSP90AA1 and nitric oxide synthase NOS1, NOS2 or NOS3; the complex maintenance is independent of ASL catalytic function. In terms of processing, acetylation modifies enzyme activity in response to alterations of extracellular nutrient availability. Acetylation increased with trichostin A (TSA) or with nicotinamide (NAM). Glucose increases acetylation by about a factor of 3 with decreasing enzyme activity. Acetylation on Lys-288 is decreased on the addition of extra amino acids resulting in activation of enzyme activity.

It catalyses the reaction 2-(N(omega)-L-arginino)succinate = fumarate + L-arginine. The protein operates within amino-acid biosynthesis; L-arginine biosynthesis; L-arginine from L-ornithine and carbamoyl phosphate: step 3/3. Its pathway is nitrogen metabolism; urea cycle; L-arginine and fumarate from (N(omega)-L-arginino)succinate: step 1/1. With respect to regulation, enzyme activity is regulated by acetylation. In terms of biological role, catalyzes the reversible cleavage of L-argininosuccinate to fumarate and L-arginine, an intermediate step reaction in the urea cycle mostly providing for hepatic nitrogen detoxification into excretable urea as well as de novo L-arginine synthesis in nonhepatic tissues. Essential regulator of intracellular and extracellular L-arginine pools. As part of citrulline-nitric oxide cycle, forms tissue-specific multiprotein complexes with argininosuccinate synthase ASS1, transport protein SLC7A1 and nitric oxide synthase NOS1, NOS2 or NOS3, allowing for cell-autonomous L-arginine synthesis while channeling extracellular L-arginine to nitric oxide synthesis pathway. This is Argininosuccinate lyase (ASL) from Bos taurus (Bovine).